The chain runs to 432 residues: Peptidase B (432 aa).

2 residues coordinate Mn(2+): Lys196 and Asp201. The active site involves Lys208. 3 residues coordinate Mn(2+): Asp219, Asp278, and Glu280. Residue Arg282 is part of the active site.

The protein belongs to the peptidase M17 family. As to quaternary structure, homohexamer. It depends on Mn(2+) as a cofactor.

The protein localises to the cytoplasm. It carries out the reaction Release of an N-terminal amino acid, Xaa, from a peptide or arylamide. Xaa is preferably Glu or Asp but may be other amino acids, including Leu, Met, His, Cys and Gln.. Functionally, probably plays an important role in intracellular peptide degradation. In Yersinia pseudotuberculosis serotype IB (strain PB1/+), this protein is Peptidase B.